A 352-amino-acid chain; its full sequence is N-acetyl-gamma-glutamyl-phosphate reductase (352 aa).

Residue cysteine 151 is part of the active site.

Belongs to the NAGSA dehydrogenase family. Type 1 subfamily.

The protein localises to the cytoplasm. The enzyme catalyses N-acetyl-L-glutamate 5-semialdehyde + phosphate + NADP(+) = N-acetyl-L-glutamyl 5-phosphate + NADPH + H(+). It functions in the pathway amino-acid biosynthesis; L-arginine biosynthesis; N(2)-acetyl-L-ornithine from L-glutamate: step 3/4. In terms of biological role, catalyzes the NADPH-dependent reduction of N-acetyl-5-glutamyl phosphate to yield N-acetyl-L-glutamate 5-semialdehyde. The protein is N-acetyl-gamma-glutamyl-phosphate reductase of Renibacterium salmoninarum (strain ATCC 33209 / DSM 20767 / JCM 11484 / NBRC 15589 / NCIMB 2235).